The following is a 122-amino-acid chain: UPF0102 protein Rleg2_4331 (122 aa).

Belongs to the UPF0102 family.

This chain is UPF0102 protein Rleg2_4331, found in Rhizobium leguminosarum bv. trifolii (strain WSM2304).